A 413-amino-acid polypeptide reads, in one-letter code: Argininosuccinate synthase (413 aa).

Residues 12–20 (AYSGGLDTS) and Ala-39 contribute to the ATP site. The L-citrulline site is built by Tyr-92 and Ser-97. Position 122 (Gly-122) interacts with ATP. 3 residues coordinate L-aspartate: Thr-124, Asn-128, and Asp-129. Asn-128 serves as a coordination point for L-citrulline. Residues Arg-132, Ser-189, Ser-198, Glu-274, and Tyr-286 each coordinate L-citrulline.

This sequence belongs to the argininosuccinate synthase family. Type 1 subfamily. In terms of assembly, homotetramer.

Its subcellular location is the cytoplasm. The catalysed reaction is L-citrulline + L-aspartate + ATP = 2-(N(omega)-L-arginino)succinate + AMP + diphosphate + H(+). The protein operates within amino-acid biosynthesis; L-arginine biosynthesis; L-arginine from L-ornithine and carbamoyl phosphate: step 2/3. This is Argininosuccinate synthase from Aliarcobacter butzleri (strain RM4018) (Arcobacter butzleri).